We begin with the raw amino-acid sequence, 463 residues long: ATP-dependent protease ATPase subunit HslU (463 aa).

ATP contacts are provided by residues Val19, 61–66, Asp277, Glu341, and Arg413; that span reads GVGKTE.

Belongs to the ClpX chaperone family. HslU subfamily. As to quaternary structure, a double ring-shaped homohexamer of HslV is capped on each side by a ring-shaped HslU homohexamer. The assembly of the HslU/HslV complex is dependent on binding of ATP.

Its subcellular location is the cytoplasm. Its function is as follows. ATPase subunit of a proteasome-like degradation complex; this subunit has chaperone activity. The binding of ATP and its subsequent hydrolysis by HslU are essential for unfolding of protein substrates subsequently hydrolyzed by HslV. HslU recognizes the N-terminal part of its protein substrates and unfolds these before they are guided to HslV for hydrolysis. The chain is ATP-dependent protease ATPase subunit HslU from Shouchella clausii (strain KSM-K16) (Alkalihalobacillus clausii).